The primary structure comprises 134 residues: Acyl carrier protein, chloroplastic (134 aa).

The transit peptide at 1-51 directs the protein to the chloroplast; sequence MATTFSASVSMQATSLATTTRISFQKPVLVSNHGRTNLSFNLSRTRLSISC. Residues 55–130 form the Carrier domain; it reads QETVEKVSEI…QAAELIEELM (76 aa). Ser-90 is subject to O-(pantetheine 4'-phosphoryl)serine.

Belongs to the acyl carrier protein (ACP) family. Post-translationally, 4'-phosphopantetheine is transferred from CoA to a specific serine of apo-ACP by acpS. This modification is essential for activity because fatty acids are bound in thioester linkage to the sulfhydryl of the prosthetic group. In terms of tissue distribution, seed.

The protein resides in the plastid. Its subcellular location is the chloroplast. It participates in lipid metabolism; fatty acid biosynthesis. Carrier of the growing fatty acid chain in fatty acid biosynthesis. This chain is Acyl carrier protein, chloroplastic (ACL1.C1), found in Brassica napus (Rape).